Here is a 140-residue protein sequence, read N- to C-terminus: Interleukin-4 (140 aa).

A signal peptide spans 1–20 (MGLNPQLVVILLFFLECTRS). Cystine bridges form between Cys25–Cys107, Cys47–Cys87, and Cys69–Cys114. 3 N-linked (GlcNAc...) asparagine glycosylation sites follow: Asn61, Asn91, and Asn117.

Belongs to the IL-4/IL-13 family. Interacts with IL4R. Interacts with IL13RA1.

Its subcellular location is the secreted. In terms of biological role, cytokine secreted primarily by mast cells, T-cells, eosinophils, and basophils that plays a role in regulating antibody production, hematopoiesis and inflammation, and the development of effector T-cell responses. Induces the expression of class II MHC molecules on resting B-cells. Enhances both secretion and cell surface expression of IgE and IgG1. Also regulates the expression of the low affinity Fc receptor for IgE (CD23) on both lymphocytes and monocytes. Positively regulates IL31RA expression in macrophages. Stimulates autophagy in dendritic cells by interfering with mTORC1 signaling and through the induction of RUFY4. In addition, plays a critical role in higher functions of the normal brain, such as memory and learning. Upon binding to IL4, IL4R receptor dimerizes either with the common IL2R gamma chain/IL2RG to produce the type 1 signaling complex, located mainly on hematopoietic cells, or with the IL13RA1 to produce the type 2 complex, which is also expressed on nonhematopoietic cells. Engagement of both types of receptors initiates JAK3 and to a lower extend JAK1 phosphorylation leading to activation of the signal transducer and activator of transcription 6/STAT6. The protein is Interleukin-4 (Il4) of Mus musculus (Mouse).